We begin with the raw amino-acid sequence, 396 residues long: E3 ubiquitin-protein transferase MAEA (396 aa).

Residues 1–124 (MAVQESAVQL…AAASVWKRKR (124 aa)) are extracellular and involved in cell to cell contact. Thr-28 carries the phosphothreonine modification. The 33-residue stretch at 121–153 (KRKRMDRMMVEHLLRCGYYNTAVKLARQSGIED) folds into the LisH domain. In terms of domain architecture, CTLH spans 159 to 216 (MFLTAKEVEESLERRETATCLAWCHDNKSRLRKMKSCLEFSLRIQEFIELIRQNKRLD). An RING-Gid-type zinc finger spans residues 314 to 381 (CPVCSRSLNK…QDDKVVCPRT (68 aa)).

In terms of assembly, identified in the CTLH complex that contains GID4, RANBP9 and/or RANBP10, MKLN1, MAEA, RMND5A (or alternatively its paralog RMND5B), GID8, ARMC8, WDR26 and YPEL5. Within this complex, MAEA, RMND5A (or alternatively its paralog RMND5B), GID8, WDR26, and RANBP9 and/or RANBP10 form the catalytic core, while GID4, MKLN1, ARMC8 and YPEL5 have ancillary roles. Interacts with F-actin. Autoubiquitinated as component of the CTLH E3 ubiquitin-protein ligase complex (in vitro).

It localises to the cytoplasm. It is found in the nucleus. The protein resides in the nucleoplasm. The protein localises to the nucleus matrix. Its subcellular location is the cell membrane. It localises to the cytoskeleton. The enzyme catalyses S-ubiquitinyl-[E2 ubiquitin-conjugating enzyme]-L-cysteine + [acceptor protein]-L-lysine = [E2 ubiquitin-conjugating enzyme]-L-cysteine + N(6)-ubiquitinyl-[acceptor protein]-L-lysine.. Core component of the CTLH E3 ubiquitin-protein ligase complex that selectively accepts ubiquitin from UBE2H and mediates ubiquitination and subsequent proteasomal degradation of the transcription factor HBP1. MAEA and RMND5A are both required for catalytic activity of the CTLH E3 ubiquitin-protein ligase complex. MAEA is required for normal cell proliferation. The CTLH E3 ubiquitin-protein ligase complex is not required for the degradation of enzymes involved in gluconeogenesis, such as FBP1. Plays a role in erythroblast enucleation during erythrocyte maturation and in the development of mature macrophages. Mediates the attachment of erythroid cell to mature macrophages; this MAEA-mediated contact inhibits erythroid cell apoptosis. Participates in erythroblastic island formation, which is the functional unit of definitive erythropoiesis. Associates with F-actin to regulate actin distribution in erythroblasts and macrophages. May contribute to nuclear architecture and cells division events. In Macaca fascicularis (Crab-eating macaque), this protein is E3 ubiquitin-protein transferase MAEA (MAEA).